The chain runs to 875 residues: Transcription factor tenR (875 aa).

A DNA-binding region (zn(2)-C6 fungal-type) is located at residues Cys-16–Cys-44. Disordered stretches follow at residues Ala-54–Asn-73, Asp-136–Pro-172, and Pro-620–Arg-642. Composition is skewed to polar residues over residues Pro-153–Ala-168 and Ser-627–Arg-642.

The protein localises to the nucleus. Transcription factor that positively regulates the expression of the genes that mediate the biosynthesis of tenellin-type 2-pyridones, iron-chelating compounds involved in iron stress tolerance, competition with the natural competitor fungus Metarhizium robertsii and insect hosts infection. The protein is Transcription factor tenR of Beauveria bassiana (strain ARSEF 2860) (White muscardine disease fungus).